Consider the following 403-residue polypeptide: Arginine deiminase (403 aa).

Catalysis depends on cysteine 388, which acts as the Amidino-cysteine intermediate.

Belongs to the arginine deiminase family.

It is found in the cytoplasm. It catalyses the reaction L-arginine + H2O = L-citrulline + NH4(+). It participates in amino-acid degradation; L-arginine degradation via ADI pathway; carbamoyl phosphate from L-arginine: step 1/2. This Mycoplasma capricolum subsp. capricolum (strain California kid / ATCC 27343 / NCTC 10154) protein is Arginine deiminase.